The sequence spans 248 residues: 3-deoxy-manno-octulosonate cytidylyltransferase (248 aa).

This sequence belongs to the KdsB family.

It localises to the cytoplasm. The catalysed reaction is 3-deoxy-alpha-D-manno-oct-2-ulosonate + CTP = CMP-3-deoxy-beta-D-manno-octulosonate + diphosphate. Its pathway is nucleotide-sugar biosynthesis; CMP-3-deoxy-D-manno-octulosonate biosynthesis; CMP-3-deoxy-D-manno-octulosonate from 3-deoxy-D-manno-octulosonate and CTP: step 1/1. It functions in the pathway bacterial outer membrane biogenesis; lipopolysaccharide biosynthesis. Its function is as follows. Activates KDO (a required 8-carbon sugar) for incorporation into bacterial lipopolysaccharide in Gram-negative bacteria. This Photobacterium profundum (strain SS9) protein is 3-deoxy-manno-octulosonate cytidylyltransferase.